A 526-amino-acid polypeptide reads, in one-letter code: Probable di/tripeptide-binding protein 5 (526 aa).

A signal peptide spans 1–21; it reads MRLAAFSLFLAPLLLAQPAAA.

The protein belongs to the bacterial solute-binding protein 5 family. In terms of assembly, the complex is composed of two ATP-binding proteins (DppD and DppF), two transmembrane proteins (DppB and DppC) and a solute-binding protein (DppA5). Five orthologous SBPs (DppA1-A5) are present in P.aeruginosa, which increases the substrate specificity of the DppBCDF transporter.

Part of the ABC transporter DppABCDF involved in the uptake of various di/tripeptides. The sequence is that of Probable di/tripeptide-binding protein 5 from Pseudomonas aeruginosa (strain UCBPP-PA14).